We begin with the raw amino-acid sequence, 629 residues long: tRNA uridine 5-carboxymethylaminomethyl modification enzyme MnmG (629 aa).

FAD-binding positions include 13 to 18 (GGGHAG), valine 125, and serine 180. Residue 273–287 (GPRYCPSIEDKVMRF) participates in NAD(+) binding. Glutamine 370 serves as a coordination point for FAD.

This sequence belongs to the MnmG family. Homodimer. Heterotetramer of two MnmE and two MnmG subunits. FAD serves as cofactor.

It localises to the cytoplasm. NAD-binding protein involved in the addition of a carboxymethylaminomethyl (cmnm) group at the wobble position (U34) of certain tRNAs, forming tRNA-cmnm(5)s(2)U34. The chain is tRNA uridine 5-carboxymethylaminomethyl modification enzyme MnmG from Salmonella agona (strain SL483).